A 410-amino-acid polypeptide reads, in one-letter code: Arginine biosynthesis bifunctional protein ArgJ (410 aa).

Substrate-binding residues include Thr-158, Lys-184, Thr-195, Glu-282, Asn-405, and Ser-410. Residue Thr-195 is the Nucleophile of the active site.

It belongs to the ArgJ family. Heterotetramer of two alpha and two beta chains.

The protein localises to the cytoplasm. It carries out the reaction N(2)-acetyl-L-ornithine + L-glutamate = N-acetyl-L-glutamate + L-ornithine. The enzyme catalyses L-glutamate + acetyl-CoA = N-acetyl-L-glutamate + CoA + H(+). Its pathway is amino-acid biosynthesis; L-arginine biosynthesis; L-ornithine and N-acetyl-L-glutamate from L-glutamate and N(2)-acetyl-L-ornithine (cyclic): step 1/1. It participates in amino-acid biosynthesis; L-arginine biosynthesis; N(2)-acetyl-L-ornithine from L-glutamate: step 1/4. Catalyzes two activities which are involved in the cyclic version of arginine biosynthesis: the synthesis of N-acetylglutamate from glutamate and acetyl-CoA as the acetyl donor, and of ornithine by transacetylation between N(2)-acetylornithine and glutamate. The sequence is that of Arginine biosynthesis bifunctional protein ArgJ from Bartonella henselae (strain ATCC 49882 / DSM 28221 / CCUG 30454 / Houston 1) (Rochalimaea henselae).